The primary structure comprises 875 residues: Alanine--tRNA ligase (875 aa).

Histidine 564, histidine 568, cysteine 666, and histidine 670 together coordinate Zn(2+).

This sequence belongs to the class-II aminoacyl-tRNA synthetase family. Zn(2+) serves as cofactor.

The protein localises to the cytoplasm. The enzyme catalyses tRNA(Ala) + L-alanine + ATP = L-alanyl-tRNA(Ala) + AMP + diphosphate. Its function is as follows. Catalyzes the attachment of alanine to tRNA(Ala) in a two-step reaction: alanine is first activated by ATP to form Ala-AMP and then transferred to the acceptor end of tRNA(Ala). Also edits incorrectly charged Ser-tRNA(Ala) and Gly-tRNA(Ala) via its editing domain. This chain is Alanine--tRNA ligase, found in Mannheimia succiniciproducens (strain KCTC 0769BP / MBEL55E).